Consider the following 95-residue polypeptide: Co-chaperonin GroES (95 aa).

This sequence belongs to the GroES chaperonin family. As to quaternary structure, heptamer of 7 subunits arranged in a ring. Interacts with the chaperonin GroEL.

It is found in the cytoplasm. Together with the chaperonin GroEL, plays an essential role in assisting protein folding. The GroEL-GroES system forms a nano-cage that allows encapsulation of the non-native substrate proteins and provides a physical environment optimized to promote and accelerate protein folding. GroES binds to the apical surface of the GroEL ring, thereby capping the opening of the GroEL channel. The chain is Co-chaperonin GroES from Chlorobium limicola (strain DSM 245 / NBRC 103803 / 6330).